A 772-amino-acid polypeptide reads, in one-letter code: Potassium transporter 24 (772 aa).

Over 1 to 23 (MDVEGGGAAARRKGGWWWWREEA) the chain is Cytoplasmic. Residues 24–44 (VLAYQSLGVVYGEVAAAPLYV) traverse the membrane as a helical segment. Residues 45-66 (YRSAFAGGDIEHSAGNEEIYGA) are Extracellular-facing. The chain crosses the membrane as a helical span at residues 67–87 (LSLVFWTLTLVPLAKYVLLVL). Over 88 to 150 (RADDAGEGGT…ALERHRVLQR (63 aa)) the chain is Cytoplasmic. A helical membrane pass occupies residues 151 to 171 (LLLLLALLGTCMVIGDGVLTP). Residues 172-192 (AVSVFSAVSGLELSMDKDQHK) lie on the Extracellular side of the membrane. The chain crosses the membrane as a helical span at residues 193–213 (YILLPITCVILVCLFALQHYG). The Cytoplasmic segment spans residues 214–216 (THR). Residues 217 to 237 (VGFLFAPIVCLWLLCISIIGV) traverse the membrane as a helical segment. The Extracellular segment spans residues 238-265 (YNIIHWNPHVYQALSPYYMYKFLRKTQT). Residues 266-286 (GGWMSLGGILLCVTGSEAMYA) form a helical membrane-spanning segment. Residues 287–298 (DLGHFTQNSIKM) lie on the Cytoplasmic side of the membrane. The helical transmembrane segment at 299–319 (AFTLLVYPALVLAYMGQAAYI) threads the bilayer. Over 320–344 (SRHHNFEDGSHIGFYVSVPEKIRWP) the chain is Extracellular. A helical transmembrane segment spans residues 345–365 (VLGIAILASVVGSQAIITGTF). At 366–392 (SIIKQCSSLNCFPRVKIVHTSSTVHGQ) the chain is on the cytoplasmic side. Residues 393-413 (IYIPEINWILMILCLSVTIGF) traverse the membrane as a helical segment. Residues 414–423 (RDTKHLTNAQ) are Extracellular-facing. Residues 424 to 444 (GLAVITVMLVTTCLMSLVILL) traverse the membrane as a helical segment. Residues 445–449 (CWNKS) are Cytoplasmic-facing. Residues 450–470 (IVYALSFLLFFGAIEVIYFAA) traverse the membrane as a helical segment. Topologically, residues 471-477 (SLVKFHE) are extracellular. Residues 478–498 (GAWVPVTLSFIFMMVMCVWHY) form a helical membrane-spanning segment. Topologically, residues 499–772 (GTKKKYEFDV…TVEVGMICLV (274 aa)) are cytoplasmic. The interval 656 to 684 (EEGEFDGSDSTGSSAHKEINPNTTAPKPK) is disordered.

It belongs to the HAK/KUP transporter (TC 2.A.72.3) family.

It is found in the membrane. Functionally, high-affinity potassium transporter. The protein is Potassium transporter 24 (HAK24) of Oryza sativa subsp. japonica (Rice).